The primary structure comprises 249 residues: Methylthioribulose-1-phosphate dehydratase (249 aa).

Residues histidine 103 and histidine 105 each contribute to the Zn(2+) site.

It belongs to the aldolase class II family. MtnB subfamily. The cofactor is Zn(2+).

It catalyses the reaction 5-(methylsulfanyl)-D-ribulose 1-phosphate = 5-methylsulfanyl-2,3-dioxopentyl phosphate + H2O. The protein operates within amino-acid biosynthesis; L-methionine biosynthesis via salvage pathway; L-methionine from S-methyl-5-thio-alpha-D-ribose 1-phosphate: step 2/6. Its function is as follows. Catalyzes the dehydration of methylthioribulose-1-phosphate (MTRu-1-P) into 2,3-diketo-5-methylthiopentyl-1-phosphate (DK-MTP-1-P). In Leptospira interrogans serogroup Icterohaemorrhagiae serovar Lai (strain 56601), this protein is Methylthioribulose-1-phosphate dehydratase.